A 435-amino-acid chain; its full sequence is T-box transcription factor T (435 aa).

A DNA-binding region (T-box) is located at residues 51 to 219 (LWLRFKELTN…YNPFAKAFLD (169 aa)). Disordered regions lie at residues 280 to 310 (PALR…PSAC) and 384 to 412 (APLG…DVPD). The segment covering 297–310 (RNNSPTYSDNPSAC) has biased composition (polar residues).

Monomer. Binds DNA as a monomer.

The protein localises to the nucleus. In terms of biological role, involved in the transcriptional regulation of genes required for mesoderm formation and differentiation. Binds to a palindromic site (called T site) and activates gene transcription when bound to such a site. The polypeptide is T-box transcription factor T (Canis lupus familiaris (Dog)).